Reading from the N-terminus, the 142-residue chain is Large ribosomal subunit protein uL11 (142 aa).

The protein belongs to the universal ribosomal protein uL11 family. As to quaternary structure, part of the ribosomal stalk of the 50S ribosomal subunit. Interacts with L10 and the large rRNA to form the base of the stalk. L10 forms an elongated spine to which L12 dimers bind in a sequential fashion forming a multimeric L10(L12)X complex. One or more lysine residues are methylated.

In terms of biological role, forms part of the ribosomal stalk which helps the ribosome interact with GTP-bound translation factors. This is Large ribosomal subunit protein uL11 from Nocardioides sp. (strain ATCC BAA-499 / JS614).